Reading from the N-terminus, the 124-residue chain is Small ribosomal subunit protein uS12 (124 aa).

A disordered region spans residues 1–20 (MPTIQQLVRKGRTPKVVKTK). Residues 9-18 (RKGRTPKVVK) are compositionally biased toward basic residues. D89 carries the 3-methylthioaspartic acid modification.

This sequence belongs to the universal ribosomal protein uS12 family. In terms of assembly, part of the 30S ribosomal subunit. Contacts proteins S8 and S17. May interact with IF1 in the 30S initiation complex.

Its function is as follows. With S4 and S5 plays an important role in translational accuracy. Functionally, interacts with and stabilizes bases of the 16S rRNA that are involved in tRNA selection in the A site and with the mRNA backbone. Located at the interface of the 30S and 50S subunits, it traverses the body of the 30S subunit contacting proteins on the other side and probably holding the rRNA structure together. The combined cluster of proteins S8, S12 and S17 appears to hold together the shoulder and platform of the 30S subunit. This is Small ribosomal subunit protein uS12 from Clavibacter michiganensis subsp. michiganensis (strain NCPPB 382).